Consider the following 938-residue polypeptide: Probable outer membrane protein pmp15 (938 aa).

An N-terminal signal peptide occupies residues 1–17 (MRFFCFGMLLPFTFVLA). In terms of domain architecture, Autotransporter spans 659-938 (DEEKGHAASL…YLNVASRMRF (280 aa)).

It belongs to the PMP outer membrane protein family.

The protein localises to the secreted. It is found in the cell wall. The protein resides in the cell outer membrane. The sequence is that of Probable outer membrane protein pmp15 (pmp15) from Chlamydia pneumoniae (Chlamydophila pneumoniae).